A 230-amino-acid chain; its full sequence is Ribosomal RNA small subunit methyltransferase G (230 aa).

S-adenosyl-L-methionine-binding positions include glycine 93, leucine 98, 144–145 (IE), and arginine 158.

This sequence belongs to the methyltransferase superfamily. RNA methyltransferase RsmG family.

The protein localises to the cytoplasm. It carries out the reaction guanosine(527) in 16S rRNA + S-adenosyl-L-methionine = N(7)-methylguanosine(527) in 16S rRNA + S-adenosyl-L-homocysteine. Its function is as follows. Specifically methylates the N7 position of guanine in position 527 of 16S rRNA. The protein is Ribosomal RNA small subunit methyltransferase G of Bordetella parapertussis (strain 12822 / ATCC BAA-587 / NCTC 13253).